A 122-amino-acid polypeptide reads, in one-letter code: Large ribosomal subunit protein uL14 (122 aa).

This sequence belongs to the universal ribosomal protein uL14 family. In terms of assembly, part of the 50S ribosomal subunit. Forms a cluster with proteins L3 and L19. In the 70S ribosome, L14 and L19 interact and together make contacts with the 16S rRNA in bridges B5 and B8.

In terms of biological role, binds to 23S rRNA. Forms part of two intersubunit bridges in the 70S ribosome. This Borrelia turicatae (strain 91E135) protein is Large ribosomal subunit protein uL14.